Consider the following 432-residue polypeptide: uncharacterized protein (432 aa).

Residues 1–14 (MSDTTDVPENQKSP) are compositionally biased toward polar residues. Residues 1-42 (MSDTTDVPENQKSPKPSGKADKRKIEEKPENSSLKRKKFEDP) form a disordered region. The segment covering 18–30 (GKADKRKIEEKPE) has biased composition (basic and acidic residues). The S4 RNA-binding domain maps to 85–148 (RKMVEVFSGE…HEHPIRDLPI (64 aa)). Asp-199 is an active-site residue.

Belongs to the pseudouridine synthase RluA family.

This is an uncharacterized protein from Caenorhabditis elegans.